Consider the following 528-residue polypeptide: 4-chlorobenzoate--CoA ligase (528 aa).

Residues 161–169 (TSGTTGLPK), 300–305 (NIYGTT), and N409 each bind ATP.

Belongs to the ATP-dependent AMP-binding enzyme family. As to quaternary structure, homodimer. Mg(2+) is required as a cofactor.

The enzyme catalyses 4-chlorobenzoate + ATP + CoA = 4-chlorobenzoyl-CoA + AMP + diphosphate. The protein operates within xenobiotic degradation; 4-chlorobenzoate degradation; 4-hydroxybenzoate from 4-chlorobenzoate: step 2/3. With respect to regulation, unaffected by 5,5'-dithiobis-(2-nitrobenzoic acid), 4-chloromercuribenzoate and sodium azide. Inhibited by Cu(2+), Fe(2+) and Zn(2+). Unaffected by Na(+), K(+) and Li(+). Its function is as follows. Catalyzes the formation of chlorobenzoyl-CoA via a 2 step reaction. First 4-chlorobenzoyl is adenylated by ATP, followed by acyl transfer from the 4-chlorobenzoyl-AMP intermediate to CoA. Benzoate, 4-bromobenzoate, 4-iodobenzoate and 4-methylbenzoate also act as substrates. Inactive towards 4-aminobenzoate, 4-hydroxybenzoate, 2-aminobenzoate, 2,3-dihydroxybenzoate, 4-coumarate and the aliphatic carboxylic acids palmate, caproate, laurate and butyrate. Negligible activity is detected when ATP is replaced by UTP, CTP or GTP as cosubstrate. This is 4-chlorobenzoate--CoA ligase from Pseudomonas sp. (strain CBS-3).